The following is a 188-amino-acid chain: Cytochrome b561 homolog 2 (188 aa).

At M1–A15 the chain is on the cytoplasmic side. A helical membrane pass occupies residues A16–V36. Residues H18 and H52 each coordinate heme b. The Periplasmic segment spans residues T37 to S54. Residues I55–P75 traverse the membrane as a helical segment. Residues P76–R91 lie on the Cytoplasmic side of the membrane. A helical membrane pass occupies residues A92–S112. The Periplasmic segment spans residues T113–A143. Residues L144–L164 form a helical membrane-spanning segment. Heme b-binding residues include H145 and H159. The Cytoplasmic segment spans residues K165–V188.

Belongs to the cytochrome b561 family. It depends on heme b as a cofactor.

It localises to the cell inner membrane. The chain is Cytochrome b561 homolog 2 (yceJ) from Escherichia coli (strain K12).